Consider the following 237-residue polypeptide: NADPH-dependent FMN reductase ArsH (237 aa).

Residues 39–46 (SNRECSYS) and 102–107 (SPERHG) contribute to the FMN site.

The protein belongs to the ArsH family. Homotetramer. The cofactor is FMN.

Its function is as follows. Has NADPH-dependent FMN reductase activity and high NADPH-dependent ferric reductase activity with highest activity for Fe(3+) as substrate. No activity with NADH, iron trichloride, Cu(2+) or Ag(+). May be involved in cytosolic ferric iron assimilation as an NADPH-dependent ferric reductase in vivo. This chain is NADPH-dependent FMN reductase ArsH, found in Acidithiobacillus ferrooxidans (strain ATCC 23270 / DSM 14882 / CIP 104768 / NCIMB 8455) (Ferrobacillus ferrooxidans (strain ATCC 23270)).